The chain runs to 494 residues: UPF0371 protein SSA_0208 (494 aa).

The protein belongs to the UPF0371 family.

This Streptococcus sanguinis (strain SK36) protein is UPF0371 protein SSA_0208.